The chain runs to 823 residues: Putative ankyrin repeat domain-containing protein 20A4 (823 aa).

ANK repeat units lie at residues 66 to 95, 99 to 128, 132 to 161, 165 to 194, and 198 to 227; these read QHRT…QIDV, ENRT…NPNL, YGNT…HIEA, DNNT…SSHA, and LRRS…DVFA. 2 disordered regions span residues 301–343 and 356–405; these read VPEK…EVED and QTLR…NICD. Basic and acidic residues predominate over residues 371 to 384; that stretch reads EQQRHERSEKKQPQ. 3 coiled-coil regions span residues 431–480, 565–724, and 776–806; these read KKLK…KQLE, EMIT…NNST, and FVLE…KTEV.

The polypeptide is Putative ankyrin repeat domain-containing protein 20A4 (Homo sapiens (Human)).